We begin with the raw amino-acid sequence, 93 residues long: Protein S100-A5 (93 aa).

2 consecutive EF-hand domains span residues 12 to 47 and 48 to 83; these read MVTTFHKYSGREGSKLTLSRKELKELIKTELSLAEK and MKESSIDNLMKSLDKNSDQEIDFKEYSVFLTTLCMA. Residues Thr28, Glu33, Asp61, Asn63, Asp65, Glu67, and Glu72 each coordinate Ca(2+).

Belongs to the S-100 family. As to quaternary structure, homodimer.

In terms of biological role, binds calcium, zinc and copper. One subunit can simultaneously bind 2 calcium ions or 2 copper ions plus 1 zinc ion. Calcium and copper ions compete for the same binding sites. The protein is Protein S100-A5 (S100a5) of Mus musculus (Mouse).